A 435-amino-acid polypeptide reads, in one-letter code: Glutamyl-tRNA reductase (435 aa).

Residues T49–R52, S109, E114–Q116, and Q120 contribute to the substrate site. C50 serves as the catalytic Nucleophile. Position 189-194 (G189–S194) interacts with NADP(+).

It belongs to the glutamyl-tRNA reductase family. As to quaternary structure, homodimer.

The enzyme catalyses (S)-4-amino-5-oxopentanoate + tRNA(Glu) + NADP(+) = L-glutamyl-tRNA(Glu) + NADPH + H(+). Its pathway is porphyrin-containing compound metabolism; protoporphyrin-IX biosynthesis; 5-aminolevulinate from L-glutamyl-tRNA(Glu): step 1/2. Its function is as follows. Catalyzes the NADPH-dependent reduction of glutamyl-tRNA(Glu) to glutamate 1-semialdehyde (GSA). The polypeptide is Glutamyl-tRNA reductase (Listeria innocua serovar 6a (strain ATCC BAA-680 / CLIP 11262)).